The sequence spans 96 residues: Conotoxin Mr15.1 (96 aa).

A signal peptide spans 1 to 20 (MSTLKMMLLILLLLLPLATF). A propeptide spanning residues 21–57 (DSDGQAIPGGGIPSAVNSRVGRLLGGDEKSGRSLEKR) is cleaved from the precursor.

The protein belongs to the conotoxin N superfamily. In terms of processing, contains 4 disulfide bonds. Expressed by the venom duct.

The protein resides in the secreted. This is Conotoxin Mr15.1 from Conus marmoreus (Marble cone).